Reading from the N-terminus, the 245-residue chain is Glycerophosphodiester phosphodiesterase (245 aa).

The region spanning Thr-2–Arg-241 is the GP-PDE domain. Residue His-7 is the Proton acceptor of the active site. A divalent metal cation is bound by residues Glu-34 and Asp-36. His-49 functions as the Proton donor in the catalytic mechanism. Glu-110 contacts a divalent metal cation.

This sequence belongs to the glycerophosphoryl diester phosphodiesterase family. It depends on Ni(2+) as a cofactor. Requires Co(2+) as cofactor. Mn(2+) serves as cofactor.

It carries out the reaction a sn-glycero-3-phosphodiester + H2O = an alcohol + sn-glycerol 3-phosphate + H(+). Its activity is regulated as follows. Inhibited by EDTA and various organic solvents such as chloroform, toluene or benzene. Functionally, glycerophosphodiester phosphodiesterase hydrolyzes glycerophosphodiesters into glycerol-3-phosphate (G3P) and the corresponding alcohol. Can hydrolyze the model substrate bis-(p-nitrophenyl phosphate) (bis(pNPP)) to p-nitrophenol. Can also catalyze the degradation of diphenyl phosphate (DPHP) to phenyl phosphate (PHP). DPHP is an aryl phosphate ester used as a chemical additive and an industrial catalyst that can easily spread to the environment and exhibits toxicity toward organisms. This Bacillus altitudinis protein is Glycerophosphodiester phosphodiesterase.